The following is a 393-amino-acid chain: GDP-mannose:cellobiosyl-diphosphopolyprenol alpha-mannosyltransferase (393 aa).

It belongs to the glycosyltransferase group 1 family. Glycosyltransferase 4 subfamily.

The enzyme catalyses beta-D-Glc-(1-&gt;4)-alpha-D-Glc-di-trans,octa-cis-undecaprenyl diphosphate + GDP-alpha-D-mannose = alpha-D-Man-(1-&gt;3)-beta-D-Glc-(1-&gt;4)-alpha-D-Glc-1-di-trans,octa-cis-undecaprenyl diphosphate + GDP + H(+). Involved in the biosynthesis of the exopolysaccharide acetan, a water-soluble polysaccharide involved in production of bacterial cellulose (BC). The chain is GDP-mannose:cellobiosyl-diphosphopolyprenol alpha-mannosyltransferase (aceC) from Komagataeibacter xylinus (Gluconacetobacter xylinus).